The sequence spans 254 residues: Triosephosphate isomerase (254 aa).

Residue 10 to 12 coordinates substrate; that stretch reads NWK. Histidine 96 functions as the Electrophile in the catalytic mechanism. The active-site Proton acceptor is the glutamate 168. Residues glycine 174, serine 214, and 235 to 236 each bind substrate; that span reads GG.

The protein belongs to the triosephosphate isomerase family. In terms of assembly, homodimer.

The protein resides in the cytoplasm. The catalysed reaction is D-glyceraldehyde 3-phosphate = dihydroxyacetone phosphate. It participates in carbohydrate biosynthesis; gluconeogenesis. Its pathway is carbohydrate degradation; glycolysis; D-glyceraldehyde 3-phosphate from glycerone phosphate: step 1/1. Involved in the gluconeogenesis. Catalyzes stereospecifically the conversion of dihydroxyacetone phosphate (DHAP) to D-glyceraldehyde-3-phosphate (G3P). This is Triosephosphate isomerase from Rhodopirellula baltica (strain DSM 10527 / NCIMB 13988 / SH1).